A 488-amino-acid chain; its full sequence is Probable metabolite transport protein YBR241C (488 aa).

Over 1–18 (MAETERLMPNGGSRETKP) the chain is Cytoplasmic. Residues 19–39 (LITGHLILGTIVACLGSIQYG) form a helical membrane-spanning segment. The Vacuolar portion of the chain corresponds to 40–87 (YHIAELNAPQEFLSCSRFEAPDENISYDDTWVGQHGLKQCIALTDSQY). A glycan (N-linked (GlcNAc...) asparagine) is linked at asparagine 63. Residues 88-108 (GAITSIFSIGGLFGSYYAGNW) form a helical membrane-spanning segment. The Cytoplasmic segment spans residues 109–121 (ANRYGRKYVSMGA). The helical transmembrane segment at 122–142 (SAMCMVSSLLLFFSNSYLQLL) threads the bilayer. Residues 143–146 (FGRF) lie on the Vacuolar side of the membrane. The helical transmembrane segment at 147–167 (LVGMSCGTAIVITPLFINEIA) threads the bilayer. Residues 168–178 (PVEWRGAMGSM) lie on the Cytoplasmic side of the membrane. Residues 179-198 (NQVSINLGILLTQTLALKYA) form a helical membrane-spanning segment. Residues 199-204 (DSYNWR) lie on the Vacuolar side of the membrane. A helical membrane pass occupies residues 205-225 (WLLFSGSVIAVANILAWLKVD). Over 226–299 (ESPRWLVSHG…DPSYKKPRTV (74 aa)) the chain is Cytoplasmic. Residues 258–279 (EIQDWQRSHGHNRDPESSEETH) show a composition bias toward basic and acidic residues. The disordered stretch occupies residues 258-281 (EIQDWQRSHGHNRDPESSEETHSG). The chain crosses the membrane as a helical span at residues 300–320 (ILAILSCQQFCGINSIIFYGV). The Vacuolar portion of the chain corresponds to 321-322 (KV). The chain crosses the membrane as a helical span at residues 323–337 (IGKILPDYSIQVNFA). The Cytoplasmic segment spans residues 338 to 344 (ISILNVV). Residues 345-364 (VTLAASAIIDHVGRRPLLLA) traverse the membrane as a helical segment. Over 365-390 (STTVMTAMSLLISVGLTLSVSFLLVT) the chain is Vacuolar. Residues 391-411 (ATFVYIAAFAIGLGPIPFLII) traverse the membrane as a helical segment. The Cytoplasmic segment spans residues 412–419 (GELSYPQD). A helical membrane pass occupies residues 420–442 (AATAQSFGTVCNWLATFIVGYLF). The Vacuolar portion of the chain corresponds to 443–446 (PIGH). Residues 447-463 (GLMGGYVFAIFAAIAAM) form a helical membrane-spanning segment. The Cytoplasmic portion of the chain corresponds to 464–488 (FATYVYKRVPETKGKTTYSEVWAGY).

This sequence belongs to the major facilitator superfamily. Sugar transporter (TC 2.A.1.1) family.

It localises to the vacuole membrane. This is Probable metabolite transport protein YBR241C from Saccharomyces cerevisiae (strain ATCC 204508 / S288c) (Baker's yeast).